Here is a 178-residue protein sequence, read N- to C-terminus: MKKFSAIFGLLSVIFVIMAISQVSGLSGAITPPKIDIMVNASNGLPQDINSIIYVKNPNSFPVKVEMVTTGDLNNSKKVEVKIMKNNFTLKPGETVGVNITFTVKEKDNYEGDILTKISPVDYGDDKKGVNLKASVVLPTKVAIMVVGNEIHTKELVITAVLIISILGLGAMLIRRHL.

The next 2 membrane-spanning stretches (helical) occupy residues 6–26 and 154–174; these read AIFG…VSGL and KELV…AMLI.

It is found in the cell membrane. This is an uncharacterized protein from Methanocaldococcus jannaschii (strain ATCC 43067 / DSM 2661 / JAL-1 / JCM 10045 / NBRC 100440) (Methanococcus jannaschii).